The sequence spans 59 residues: Large ribosomal subunit protein uL30 (59 aa).

This sequence belongs to the universal ribosomal protein uL30 family. In terms of assembly, part of the 50S ribosomal subunit.

The polypeptide is Large ribosomal subunit protein uL30 (Citrifermentans bemidjiense (strain ATCC BAA-1014 / DSM 16622 / JCM 12645 / Bem) (Geobacter bemidjiensis)).